Consider the following 456-residue polypeptide: Methionine aminopeptidase 2 (456 aa).

The segment covering 1–11 (MTIPVPKPAHP) has biased composition (pro residues). The tract at residues 1–127 (MTIPVPKPAH…SYRTTSSEKR (127 aa)) is disordered. A compositionally biased stretch (acidic residues) spans 31–45 (EADEEEDDDDEEGKE). Basic residues predominate over residues 66–79 (KKKKKKKKKPKKKK). Substrate is bound at residue His-209. 3 residues coordinate a divalent metal cation: Asp-229, Asp-240, and His-309. His-317 contacts substrate. 2 residues coordinate a divalent metal cation: Glu-343 and Glu-437.

The protein belongs to the peptidase M24A family. Methionine aminopeptidase eukaryotic type 2 subfamily. Requires Co(2+) as cofactor. Zn(2+) serves as cofactor. Mn(2+) is required as a cofactor. It depends on Fe(2+) as a cofactor.

It localises to the cytoplasm. It carries out the reaction Release of N-terminal amino acids, preferentially methionine, from peptides and arylamides.. Functionally, cotranslationally removes the N-terminal methionine from nascent proteins. The N-terminal methionine is often cleaved when the second residue in the primary sequence is small and uncharged (Met-Ala-, Cys, Gly, Pro, Ser, Thr, or Val). This chain is Methionine aminopeptidase 2, found in Puccinia graminis f. sp. tritici (strain CRL 75-36-700-3 / race SCCL) (Black stem rust fungus).